We begin with the raw amino-acid sequence, 285 residues long: HTH-type transcriptional regulator MurR (285 aa).

In terms of domain architecture, HTH rpiR-type spans 1–77 (MLYLTKIRNA…MALIGEYSAS (77 aa)). The segment at residues 37 to 56 (SRKMAKQLGISQSSIVKFAQ) is a DNA-binding region (H-T-H motif). Positions 128–268 (IIEVISKAPF…FVGLVQLNDV (141 aa)) constitute an SIS domain.

In terms of assembly, homotetramer.

It functions in the pathway amino-sugar metabolism; N-acetylmuramate degradation [regulation]. Functionally, represses the expression of the murPQ operon involved in the uptake and degradation of N-acetylmuramic acid (MurNAc). Binds to two adjacent inverted repeats within the operator region. MurNAc 6-phosphate, the substrate of MurQ, is the specific inducer that weakens binding of MurR to the operator. In Shigella sonnei (strain Ss046), this protein is HTH-type transcriptional regulator MurR.